The following is a 1074-amino-acid chain: Transmembrane protein 132E (1074 aa).

A signal peptide spans 1 to 23; it reads MAPGMSGRRGAALLCLSVLLAHA. The Extracellular portion of the chain corresponds to 26 to 894; it reads RSHPASPSPP…LTDLEIGMYA (869 aa). N-linked (GlcNAc...) asparagine glycosylation is found at asparagine 70 and asparagine 91. Disordered stretches follow at residues 205-224 and 243-266; these read PAAP…PEAA and GGCG…ESPT. Positions 247–262 are enriched in low complexity; sequence SARRGPGPGPGAAARA. N-linked (GlcNAc...) asparagine glycosylation is found at asparagine 320 and asparagine 401. 2 disordered regions span residues 564-587 and 816-867; these read RRSA…ANRG and GRDE…PVPP. Over residues 843 to 854 the composition is skewed to low complexity; the sequence is GAGPPGTAIPAG. Residues 895–915 traverse the membrane as a helical segment; the sequence is LLGVFCLAILVFLINCIVFVL. The Cytoplasmic portion of the chain corresponds to 916 to 1074; it reads RYRHKRIPPE…NYMRRIKDIA (159 aa). The segment at 962 to 1064 is disordered; sequence VPACCHGDHH…TRPTPPPDLH (103 aa). Low complexity-rich tracts occupy residues 973–985 and 1016–1026; these read SGSS…SQVH and FTTFTTLPTEE. A compositionally biased stretch (acidic residues) spans 1035 to 1044; the sequence is GEEEDEEEDL.

This sequence belongs to the TMEM132 family. In terms of tissue distribution, widely expressed, with highest levels in the cochlea. In the cochlea, detected in spiral ganglion, the organ of Corti and stria vascularis. In the organ of Corti, prominently expressed in the outer and inner hair cells, especially at the apical and basal region of the outer hair cell body (at protein level).

The protein resides in the membrane. Required for normal inner ear hair cell function and hearing. The protein is Transmembrane protein 132E (Tmem132e) of Mus musculus (Mouse).